The chain runs to 309 residues: Mitochondrial import receptor subunit TOM34 (309 aa).

Phosphoserine is present on S8. TPR repeat units lie at residues 9 to 42 (VEQL…LQAR), 51 to 84 (SVLY…VPFS), and 86 to 118 (KPLL…DNSV). The interval 158-187 (WSSLPSENHKETAKSKSKETTATKNRVPSA) is disordered. Position 160 is a phosphoserine (S160). The span at 164 to 178 (ENHKETAKSKSKETT) shows a compositional bias: basic and acidic residues. Phosphoserine is present on S186. 3 TPR repeats span residues 193–226 (ARVL…SSLE), 227–260 (SATY…DGKN), and 262–294 (KAFY…EPRN). K197 is covalently cross-linked (Glycyl lysine isopeptide (Lys-Gly) (interchain with G-Cter in SUMO2)).

Belongs to the Tom34 family. As to quaternary structure, interacts with HSP90A, VCP, ATP6V1D, KIAA0665, AMPK, and DMAP1 through its TPR repeat.

The protein localises to the cytoplasm. Its subcellular location is the mitochondrion outer membrane. Its function is as follows. Plays a role in the import of cytosolically synthesized preproteins into mitochondria. Binds the mature portion of precursor proteins. Interacts with cellular components, and possesses weak ATPase activity. May be a chaperone-like protein that helps to keep newly synthesized precursors in an unfolded import compatible state. This is Mitochondrial import receptor subunit TOM34 (Tomm34) from Rattus norvegicus (Rat).